The primary structure comprises 494 residues: Casein kinase I homolog HRR25 (494 aa).

The Protein kinase domain occupies 9 to 278; the sequence is FRIGRKIGSG…LARLFKDLSI (270 aa). ATP is bound by residues 15–23 and K38; that span reads IGSGSFGDI. Catalysis depends on D128, which acts as the Proton acceptor. S143 bears the Phosphoserine mark. A disordered region spans residues 394 to 494; it reads RQQQPQQQVQ…DKPAGQSIWL (101 aa). 2 stretches are compositionally biased toward low complexity: residues 395–418 and 432–444; these read QQQPQQQVQSSQPQPQPQQLQQQP and QQQQRDSQEQQQQ. Polar residues predominate over residues 445–479; it reads VPMATTRATQYPPQINSNNFNTNQASVPPQMRSNP.

This sequence belongs to the protein kinase superfamily. CK1 Ser/Thr protein kinase family. Casein kinase I subfamily. Interacts with HRI1. Interacts with ELP1/IKI3; the interaction leads to ELP1/IKI3 phosphorylation.

It is found in the cytoplasm. It localises to the nucleus. The protein localises to the nucleolus. The protein resides in the nucleoplasm. The catalysed reaction is L-seryl-[protein] + ATP = O-phospho-L-seryl-[protein] + ADP + H(+). It catalyses the reaction L-threonyl-[protein] + ATP = O-phospho-L-threonyl-[protein] + ADP + H(+). Protein kinase which phosphorylates serine and threonine residues. Can use casein as a substrate. Phosphorylates elongator complex member ELP1/IKI3 on 'Ser-1198' and 'Ser-1202' which promotes the tRNA modification function of the complex. Associated with repair of damaged DNA and meiosis. The polypeptide is Casein kinase I homolog HRR25 (HRR25) (Saccharomyces cerevisiae (strain ATCC 204508 / S288c) (Baker's yeast)).